The primary structure comprises 372 residues: 18-hydroxynorfluorocurarine reductase (372 aa).

Zn(2+) is bound by residues C47, D50, H69, E70, C100, C103, C106, C114, and C172. Residues 197–202 (GLGGIG), K226, 283–285 (LGA), S307, and R354 contribute to the NADP(+) site.

Belongs to the zinc-containing alcohol dehydrogenase family. Homodimer. The cofactor is Zn(2+). Mainly expressed in roots.

It catalyses the reaction (19E)-cur-19-en-17-al + NADP(+) = norfluorocurarine + NADPH + H(+). The catalysed reaction is 17,18-epoxy-17-hydroxycur-19-ene + NADP(+) = 18-hydroxynorfluorocurarine + NADPH + H(+). It functions in the pathway alkaloid biosynthesis. In terms of biological role, alcohol dehydrogenase involved in the biosynthesis of curare monoterpene indole alkaloids (MIAs), natural products such as strychnine, a neurotoxic compound used as a pesticide to control rodents, and its pharmacologically active derivatives, including brucine, used to regulate blood pressure. Curare alkaloids act as animal glycine receptor antagonists. Catalyzes the conversion of norfluorocurarine to desoxy Wieland-Gumlich aldehyde, and of 18-OH norfluorocurarine to Wieland-Gumlich aldehyde. This chain is 18-hydroxynorfluorocurarine reductase, found in Strychnos nux-vomica (Poison nut).